Here is a 488-residue protein sequence, read N- to C-terminus: UDP-glycosyltransferase 73B1 (488 aa).

UDP-alpha-D-glucose is bound by residues T297, 356–358 (APQ), 373–381 (HCGWNSLLE), and 395–398 (GAEQ).

It belongs to the UDP-glycosyltransferase family.

Functionally, possesses low quercetin 3-O-glucosyltransferase and 7-O-glucosyltransferase activities in vitro. This Arabidopsis thaliana (Mouse-ear cress) protein is UDP-glycosyltransferase 73B1 (UGT73B1).